The sequence spans 1052 residues: RIMS-binding protein 2 (1052 aa).

The segment at 115 to 164 (GEYIRPLPQPGDRPEPLSAKPTFLSRSGSARCRSESDMENERNSNTSKQR) is disordered. Basic and acidic residues predominate over residues 146-156 (CRSESDMENER). The region spanning 167–234 (GKVHLCVARY…PSNFVDFVQD (68 aa)) is the SH3 1 domain. 3 consecutive Fibronectin type-III domains span residues 297–390 (VPYP…GKDV), 393–475 (APSH…KKEA), and 489–590 (PPQD…VPPT). Disordered stretches follow at residues 584–615 (ELLV…DEHL), 629–666 (RAPG…PVST), 697–716 (SAGQ…PDFK), 767–787 (EMQL…NALK), and 805–829 (FPRG…YGRD). Residues 585–598 (LLVPPTPHPRPAPQ) show a composition bias toward pro residues. Low complexity predominate over residues 645–654 (PGRRSPSPSR). Phosphoserine is present on residues serine 704 and serine 712. 2 positions are modified to phosphoserine: serine 832 and serine 839. A Phosphothreonine modification is found at threonine 841. SH3 domains lie at 848–916 (LPAR…EIQA) and 952–1019 (VSTR…EVPD). The segment at 1029-1052 (PSHYSQDTPMRSKAKRKKSVHFTP) is disordered. Positions 1040-1052 (SKAKRKKSVHFTP) are enriched in basic residues.

Belongs to the RIMBP family. In terms of assembly, interacts with RIMS1, RIMS2, CACNA1D and CACNA1B, and potentially with other Ca(2+) channel alpha-1 isoforms.

It is found in the cell membrane. It localises to the synapse. Functionally, plays a role in the synaptic transmission as bifunctional linker that interacts simultaneously with RIMS1, RIMS2, CACNA1D and CACNA1B. This is RIMS-binding protein 2 (RIMBP2) from Homo sapiens (Human).